The sequence spans 321 residues: NADPH-dependent codeinone reductase 1-3 (321 aa).

2 residues coordinate NADPH: threonine 27 and aspartate 51. Catalysis depends on proton donor residues tyrosine 56 and histidine 119. Histidine 119 contacts substrate. NADPH-binding residues include glutamine 187, serine 214, leucine 216, serine 264, and arginine 269. Residues 300-321 (ADFLLSPTGPFKTEEEFWDEKD) are disordered.

It belongs to the aldo/keto reductase family. In terms of tissue distribution, latex secreting cells (laticifer cells). Expressed constitutively in all organs with highest levels in capsules. Restricted to the parietal region of sieve elements adjacent or proximal to laticifers in roots, stems, leaves and carpels.

It localises to the cytoplasm. The protein resides in the cytosol. The catalysed reaction is codeine + NADP(+) = codeinone + NADPH + H(+). It catalyses the reaction neopine + NADP(+) = neopinone + NADPH + H(+). It carries out the reaction morphine + NADP(+) = morphinone + NADPH + H(+). The enzyme catalyses neomorphine + NADP(+) = neomorphinone + NADPH + H(+). Its pathway is alkaloid biosynthesis; morphine biosynthesis. In terms of biological role, NADPH-dependent codeinone reductase involved in biosynthesis of morphinan-type benzylisoquinoline and opiate alkaloids natural products. Reduces codeinone to codeine in the penultimate step in morphine biosynthesis. Can use morphinone, hydrocodone and hydromorphone as substrate during reductive reaction with NADPH as cofactor, and morphine and dihydrocodeine as substrate during oxidative reaction with NADP as cofactor. Converts morphinone to morphine, and neomorphinone to neomorphine. Reduces irreversibly neopinone, a spontaneous isomer of codeinone, to neopine; in planta, neopine levels are limited to low levels. The polypeptide is NADPH-dependent codeinone reductase 1-3 (Papaver somniferum (Opium poppy)).